The primary structure comprises 426 residues: D-tagatose-1,6-bisphosphate aldolase subunit KbaZ (426 aa).

This sequence belongs to the GatZ/KbaZ family. KbaZ subfamily. In terms of assembly, forms a complex with KbaY.

Its pathway is carbohydrate metabolism; D-tagatose 6-phosphate degradation; D-glyceraldehyde 3-phosphate and glycerone phosphate from D-tagatose 6-phosphate: step 2/2. Functionally, component of the tagatose-1,6-bisphosphate aldolase KbaYZ that is required for full activity and stability of the Y subunit. Could have a chaperone-like function for the proper and stable folding of KbaY. When expressed alone, KbaZ does not show any aldolase activity. This is D-tagatose-1,6-bisphosphate aldolase subunit KbaZ from Escherichia coli (strain SMS-3-5 / SECEC).